The primary structure comprises 200 residues: Putative biotin transporter BioYB (200 aa).

Transmembrane regions (helical) follow at residues 13-33, 36-56, 61-81, 90-110, 121-141, and 158-178; these read LIGM…VAPF, VAGI…LLLG, AIAM…FAQF, GKSG…GWFL, FLIA…TYMY, and WGFM…LSFI.

Belongs to the BioY family.

The protein resides in the cell membrane. Putative biotin transporter. This Bacillus subtilis (strain 168) protein is Putative biotin transporter BioYB (bioYB).